We begin with the raw amino-acid sequence, 342 residues long: Large ribosomal subunit protein uL3 (342 aa).

Positions 1 to 22 are disordered; the sequence is MGHRKLSSPRRGSAGLRPRKRA.

This sequence belongs to the universal ribosomal protein uL3 family. Part of the 50S ribosomal subunit. Forms a cluster with proteins L14 and L24e.

One of the primary rRNA binding proteins, it binds directly near the 3'-end of the 23S rRNA, where it nucleates assembly of the 50S subunit. The sequence is that of Large ribosomal subunit protein uL3 from Sulfolobus acidocaldarius (strain ATCC 33909 / DSM 639 / JCM 8929 / NBRC 15157 / NCIMB 11770).